Here is a 398-residue protein sequence, read N- to C-terminus: tRNA(Ile)-lysidine synthase (398 aa).

Residue 25–30 (SGGVDS) coordinates ATP.

It belongs to the tRNA(Ile)-lysidine synthase family.

It localises to the cytoplasm. It carries out the reaction cytidine(34) in tRNA(Ile2) + L-lysine + ATP = lysidine(34) in tRNA(Ile2) + AMP + diphosphate + H(+). Ligates lysine onto the cytidine present at position 34 of the AUA codon-specific tRNA(Ile) that contains the anticodon CAU, in an ATP-dependent manner. Cytidine is converted to lysidine, thus changing the amino acid specificity of the tRNA from methionine to isoleucine. The polypeptide is tRNA(Ile)-lysidine synthase (Francisella tularensis subsp. novicida (strain U112)).